The primary structure comprises 138 residues: uncharacterized protein (138 aa).

The protein to phage 186 CP81.

This is an uncharacterized protein from Salmonella typhimurium (strain LT2 / SGSC1412 / ATCC 700720).